Consider the following 270-residue polypeptide: Putative tRNA (cytidine(32)/guanosine(34)-2'-O)-methyltransferase (270 aa).

5 residues coordinate S-adenosyl-L-methionine: Gly-53, Trp-55, Asp-78, Asp-94, and Asp-119. Lys-159 serves as the catalytic Proton acceptor.

Belongs to the class I-like SAM-binding methyltransferase superfamily. RNA methyltransferase RlmE family. TRM7 subfamily.

The protein resides in the cytoplasm. It catalyses the reaction cytidine(32)/guanosine(34) in tRNA + 2 S-adenosyl-L-methionine = 2'-O-methylcytidine(32)/2'-O-methylguanosine(34) in tRNA + 2 S-adenosyl-L-homocysteine + 2 H(+). Methylates the 2'-O-ribose of nucleotides at positions 32 and 34 of the tRNA anticodon loop of substrate tRNAs. This Dictyostelium discoideum (Social amoeba) protein is Putative tRNA (cytidine(32)/guanosine(34)-2'-O)-methyltransferase (fsjA).